The chain runs to 478 residues: Maintenance of telomere capping protein 1 (478 aa).

A disordered region spans residues 1-153 (MSENKNSEAE…LHDPIASISN (153 aa)). Basic and acidic residues-rich tracts occupy residues 77–87 (TDKKGVEKKAP) and 95–124 (AQDE…QQQE). Over residues 125–141 (KEEEEEEEEEEEEEEEE) the composition is skewed to acidic residues. Ser-273 is modified (phosphoserine). 2 stretches are compositionally biased toward basic and acidic residues: residues 321 to 336 (QKQQ…DDRS) and 421 to 435 (SEER…KQKE). Disordered stretches follow at residues 321-341 (QKQQ…ISSN) and 416-448 (TGST…IIDP). Phosphoserine is present on Ser-436. The segment covering 436–447 (SEDEDEDDEIID) has biased composition (acidic residues).

It belongs to the MTC1 family. In terms of assembly, interacts with ribosomes.

The protein resides in the cytoplasm. It localises to the cytoplasmic vesicle. The protein localises to the COPI-coated vesicle. Its function is as follows. Involved in telomere capping. This Saccharomyces cerevisiae (strain ATCC 204508 / S288c) (Baker's yeast) protein is Maintenance of telomere capping protein 1 (MTC1).